The sequence spans 37 residues: Cytochrome b6-f complex subunit 5 (37 aa).

A helical transmembrane segment spans residues 5 to 25; it reads LLSGIVLGLVPITITGLLVTA.

This sequence belongs to the PetG family. As to quaternary structure, the 4 large subunits of the cytochrome b6-f complex are cytochrome b6, subunit IV (17 kDa polypeptide, PetD), cytochrome f and the Rieske protein, while the 4 small subunits are PetG, PetL, PetM and PetN. The complex functions as a dimer.

Its subcellular location is the plastid. The protein localises to the chloroplast thylakoid membrane. In terms of biological role, component of the cytochrome b6-f complex, which mediates electron transfer between photosystem II (PSII) and photosystem I (PSI), cyclic electron flow around PSI, and state transitions. PetG is required for either the stability or assembly of the cytochrome b6-f complex. The protein is Cytochrome b6-f complex subunit 5 of Tupiella akineta (Green alga).